Consider the following 204-residue polypeptide: Ribosomal RNA small subunit methyltransferase G (204 aa).

S-adenosyl-L-methionine contacts are provided by residues Gly76, Leu81, 127–128 (IE), and Arg140.

It belongs to the methyltransferase superfamily. RNA methyltransferase RsmG family.

It localises to the cytoplasm. The catalysed reaction is guanosine(527) in 16S rRNA + S-adenosyl-L-methionine = N(7)-methylguanosine(527) in 16S rRNA + S-adenosyl-L-homocysteine. Specifically methylates the N7 position of guanine in position 527 of 16S rRNA. The polypeptide is Ribosomal RNA small subunit methyltransferase G (Francisella philomiragia subsp. philomiragia (strain ATCC 25017 / CCUG 19701 / FSC 153 / O#319-036)).